The sequence spans 209 residues: NAD(P)H-quinone oxidoreductase subunit I (209 aa).

2 consecutive 4Fe-4S ferredoxin-type domains span residues 55–84 and 95–124; these read GRIH…VDWE and KHYS…MTEE. Residues Cys-64, Cys-67, Cys-70, Cys-74, Cys-104, Cys-107, Cys-110, and Cys-114 each contribute to the [4Fe-4S] cluster site.

The protein belongs to the complex I 23 kDa subunit family. NDH-1 is composed of at least 11 different subunits. The cofactor is [4Fe-4S] cluster.

The protein resides in the cellular thylakoid membrane. It catalyses the reaction a plastoquinone + NADH + (n+1) H(+)(in) = a plastoquinol + NAD(+) + n H(+)(out). The enzyme catalyses a plastoquinone + NADPH + (n+1) H(+)(in) = a plastoquinol + NADP(+) + n H(+)(out). Functionally, NDH-1 shuttles electrons from an unknown electron donor, via FMN and iron-sulfur (Fe-S) centers, to quinones in the respiratory and/or the photosynthetic chain. The immediate electron acceptor for the enzyme in this species is believed to be plastoquinone. Couples the redox reaction to proton translocation, and thus conserves the redox energy in a proton gradient. The protein is NAD(P)H-quinone oxidoreductase subunit I of Trichodesmium erythraeum (strain IMS101).